The primary structure comprises 328 residues: Sulfate adenylyltransferase subunit 2 (328 aa).

The segment at 309 to 328 is disordered; sequence RAIDKDQTASMEKKKQEGYF.

It belongs to the PAPS reductase family. CysD subfamily. In terms of assembly, heterodimer composed of CysD, the smaller subunit, and CysN.

It carries out the reaction sulfate + ATP + H(+) = adenosine 5'-phosphosulfate + diphosphate. It participates in sulfur metabolism; hydrogen sulfide biosynthesis; sulfite from sulfate: step 1/3. Functionally, with CysN forms the ATP sulfurylase (ATPS) that catalyzes the adenylation of sulfate producing adenosine 5'-phosphosulfate (APS) and diphosphate, the first enzymatic step in sulfur assimilation pathway. APS synthesis involves the formation of a high-energy phosphoric-sulfuric acid anhydride bond driven by GTP hydrolysis by CysN coupled to ATP hydrolysis by CysD. The sequence is that of Sulfate adenylyltransferase subunit 2 from Hyphomonas neptunium (strain ATCC 15444).